We begin with the raw amino-acid sequence, 233 residues long: Glycerol-3-phosphate acyltransferase 5 (233 aa).

The next 5 helical transmembrane spans lie at 3-23 (LVFI…MAYL), 69-89 (MILL…VGLF), 116-136 (LVMA…FGLF), 143-163 (VFLG…FFGI), and 168-188 (TISW…LMAP).

It belongs to the PlsY family. In terms of assembly, probably interacts with PlsX.

It localises to the cell membrane. It catalyses the reaction an acyl phosphate + sn-glycerol 3-phosphate = a 1-acyl-sn-glycero-3-phosphate + phosphate. The protein operates within lipid metabolism; phospholipid metabolism. Functionally, catalyzes the transfer of an acyl group from acyl-phosphate (acyl-PO(4)) to glycerol-3-phosphate (G3P) to form lysophosphatidic acid (LPA). This enzyme utilizes acyl-phosphate as fatty acyl donor, but not acyl-CoA or acyl-ACP. The sequence is that of Glycerol-3-phosphate acyltransferase 5 from Dehalococcoides mccartyi (strain ATCC BAA-2266 / KCTC 15142 / 195) (Dehalococcoides ethenogenes (strain 195)).